A 215-amino-acid polypeptide reads, in one-letter code: Vesicle transport protein SFT2C (215 aa).

The Cytoplasmic portion of the chain corresponds to methionine 1–glycine 82. The helical transmembrane segment at cysteine 83–leucine 103 threads the bilayer. At arginine 104–lysine 107 the chain is on the lumenal side. The chain crosses the membrane as a helical span at residues phenylalanine 108–glycine 128. The Cytoplasmic segment spans residues glycine 129–proline 142. The chain crosses the membrane as a helical span at residues serine 143–leucine 163. Over arginine 164 to threonine 166 the chain is Lumenal. A helical membrane pass occupies residues leucine 167–leucine 187. Residues leucine 188–valine 215 lie on the Cytoplasmic side of the membrane.

This sequence belongs to the SFT2 family.

It is found in the membrane. Its function is as follows. May be involved in fusion of retrograde transport vesicles derived from an endocytic compartment with the Golgi complex. The chain is Vesicle transport protein SFT2C from Homo sapiens (Human).